The primary structure comprises 105 residues: Iron-sulfur cluster assembly protein CyaY (105 aa).

This sequence belongs to the frataxin family.

In terms of biological role, involved in iron-sulfur (Fe-S) cluster assembly. May act as a regulator of Fe-S biogenesis. The protein is Iron-sulfur cluster assembly protein CyaY of Paraburkholderia xenovorans (strain LB400).